An 80-amino-acid polypeptide reads, in one-letter code: DNA-directed RNA polymerase subunit Rpo5 (80 aa).

The protein belongs to the archaeal Rpo5/eukaryotic RPB5 RNA polymerase subunit family. Part of the RNA polymerase complex.

It localises to the cytoplasm. The enzyme catalyses RNA(n) + a ribonucleoside 5'-triphosphate = RNA(n+1) + diphosphate. DNA-dependent RNA polymerase (RNAP) catalyzes the transcription of DNA into RNA using the four ribonucleoside triphosphates as substrates. The chain is DNA-directed RNA polymerase subunit Rpo5 from Thermofilum pendens (strain DSM 2475 / Hrk 5).